We begin with the raw amino-acid sequence, 372 residues long: MAKQYDSVECPFCDEVTKYEKLAKIGQGTFGEVFKAKHRQTGQKVALKKVLMENEKEGFPITALREIKILQLLKHENVVNLIEICRTKASPYNRCKGSIYLVFDFCEHDLAGLLSNVLVKFTLSEIKRVMQMLLNGLYYIHRNKILHRDMKAANVLITRDGVLKLADFGLARAFSLAKNSQPNRYTNRVVTLWYRPPELLLGERDYGPPIDLWGAGCIMAEMWTRSPIMQGNTEQHQLALISQLCGSITPEVWPNVDKYELFEKLELVKGQKRKVKDRLKAYVRDPYALDLIDKLLVLDPAQRIDSDDALNHDFFWSDPMPSDLKGMLSTHLTSMFEYLAPPRRKGSQITQQSTNQSRNPATTNQTEFERVF.

The region spanning 19 to 315 (YEKLAKIGQG…SDDALNHDFF (297 aa)) is the Protein kinase domain. Position 25 to 33 (25 to 33 (IGQGTFGEV)) interacts with ATP. N6-acetyllysine; by EP300/CBP, PCAF/KAT2B and GCN5/KAT2A is present on K44. ATP is bound by residues K48 and 104–106 (DFC). At K48 the chain carries N6-acetyllysine; by PCAF/KAT2B and GCN5/KAT2A. D149 functions as the Proton acceptor in the catalytic mechanism. The tract at residues 166 to 191 (ADFGLARAFSLAKNSQPNRYTNRVVT) is T-loop. An ATP-binding site is contributed by D167. Position 175 is a phosphoserine (S175). The residue at position 186 (T186) is a Phosphothreonine; by CaMK1D. The disordered stretch occupies residues 343–372 (RRKGSQITQQSTNQSRNPATTNQTEFERVF). S347 bears the Phosphoserine; by CDK9 and PKA mark. Residues 347 to 366 (SQITQQSTNQSRNPATTNQT) are compositionally biased toward polar residues. T350 carries the post-translational modification Phosphothreonine; by CDK9. The residue at position 353 (S353) is a Phosphoserine; by CDK9. T354 is subject to Phosphothreonine; by CDK9. At S357 the chain carries Phosphoserine; by CDK9. T362 and T363 each carry phosphothreonine; by CDK9.

Belongs to the protein kinase superfamily. CMGC Ser/Thr protein kinase family. CDC2/CDKX subfamily. In terms of assembly, component of the super elongation complex (SEC), at least composed of EAF1, EAF2, CDK9, MLLT3/AF9, AFF (AFF1 or AFF4), the P-TEFb complex and ELL (ELL, ELL2 or ELL3). Associates with CCNT1/cyclin-T1, CCNT2/cyclin-T2 (isoform A and isoform B) or CCNK/cyclin-K to form active P-TEFb. P-TEFb forms a complex with AFF4/AF5Q31 and is part of the super elongation complex (SEC). Component of a complex which is composed of at least 5 members: HTATSF1/Tat-SF1, P-TEFb complex, RNA pol II, SUPT5H, and NCL/nucleolin. Associates with UBR5 and forms a transcription regulatory complex composed of CDK9, RNAP II, UBR5 and TFIIS/TCEA1 that can stimulate target gene transcription (e.g. gamma fibrinogen/FGG) by recruiting their promoters. Component of the 7SK snRNP inactive complex which is composed of at least 8 members: P-TEFb (composed of CDK9 and CCNT1/cyclin-T1), HEXIM1, HEXIM2, LARP7, BCDIN3, SART3 proteins and 7SK and U6 snRNAs. This inactive 7SK snRNP complex can also interact with NCOR1 and HDAC3, probably to regulate CDK9 acetylation. Release of P-TEFb from P-TEFb/7SK snRNP complex requires both PP2B to transduce calcium Ca(2+) signaling in response to stimuli (e.g. UV or hexamethylene bisacetamide (HMBA)), and PPP1CA to dephosphorylate Thr-186. This released P-TEFb remains inactive in the pre-initiation complex with BRD4 until new Thr-186 phosphorylation occurs after the synthesis of a short RNA. Interacts with BRD4; to target chromatin binding. Interacts with JMJD6. Interacts with activated nuclear STAT3 and RELA/p65. Binds to AR and MYOD1. Forms a complex composed of CDK9, CCNT1/cyclin-T1, EP300 and GATA4 that stimulates hypertrophy in cardiomyocytes. The large PER complex involved in the repression of transcriptional termination is composed of at least PER2, CDK9, DDX5, DHX9, NCBP1 and POLR2A (active). Interacts with HSF1. Interacts with TBX21. Interacts with WDR43. Interacts with ZMYND8; the association appears to occur between homodimeric ZMYND8 and the activated form of the P-TEFb complex. Post-translationally, autophosphorylation at Thr-186, Ser-347, Thr-350, Ser-353, Thr-354 and Ser-357 triggers kinase activity by promoting cyclin and substrate binding upon conformational changes. Thr-186 phosphorylation requires the calcium Ca(2+) signaling pathway, including CaMK1D and calmodulin. This inhibition is relieved by Thr-29 dephosphorylation. Phosphorylation at Ser-175 inhibits kinase activity. Can be phosphorylated on either Thr-362 or Thr-363 but not on both simultaneously. In terms of processing, dephosphorylation of Thr-186 by PPM1A and PPM1B blocks CDK9 activity and may lead to CDK9 proteasomal degradation. However, PPP1CA-mediated Thr-186 dephosphorylation is required to release P-TEFb from its inactive P-TEFb/7SK snRNP complex. Dephosphorylated at Ser-347 by the PNUTS-PP1 complex during RNA polymerase II transcription pause-release. Dephosphorylation of C-terminus Thr and Ser residues by protein phosphatase-1 (PP1) triggers CDK9 activity. N6-acetylation of Lys-44 promotes kinase activity, whereas acetylation of both Lys-44 and Lys-48 mediated by PCAF/KAT2B and GCN5/KAT2A reduces kinase activity. The acetylated form associates with PML bodies in the nuclear matrix and with the transcriptionally silent HIV-1 genome; deacetylated upon transcription stimulation. Deacetylated by SIRT7, promoting the kinase activity and subsequent 'Ser-2' phosphorylation of the C-terminal domain (CTD) of RNA polymerase II. Post-translationally, polyubiquitinated and thus activated by UBR5. This ubiquitination is promoted by TFIIS/TCEA1 and favors 'Ser-2' phosphorylation of RPB1/POLR2A CTD. In terms of tissue distribution, expressed at high levels in brain and kidney.

Its subcellular location is the nucleus. It is found in the cytoplasm. It localises to the PML body. The catalysed reaction is L-seryl-[protein] + ATP = O-phospho-L-seryl-[protein] + ADP + H(+). The enzyme catalyses L-threonyl-[protein] + ATP = O-phospho-L-threonyl-[protein] + ADP + H(+). It catalyses the reaction [DNA-directed RNA polymerase] + ATP = phospho-[DNA-directed RNA polymerase] + ADP + H(+). Its activity is regulated as follows. Activation by Thr-186 phosphorylation is calcium Ca(2+) signaling pathway-dependent; actively inactivated by dephosphorylation mediated by PPP1CA, PPM1A and PPM1B. Reversibly repressed by acetylation at Lys-44 and Lys-48. Its function is as follows. Protein kinase involved in the regulation of transcription. Member of the cyclin-dependent kinase pair (CDK9/cyclin-T) complex, also called positive transcription elongation factor b (P-TEFb), which facilitates the transition from abortive to productive elongation by phosphorylating the CTD (C-terminal domain) of the large subunit of RNA polymerase II (RNAP II) POLR2A, SUPT5H and RDBP. This complex is inactive when in the 7SK snRNP complex form. Phosphorylates EP300, MYOD1, RPB1/POLR2A and AR and the negative elongation factors DSIF and NELFE. Regulates cytokine inducible transcription networks by facilitating promoter recognition of target transcription factors (e.g. TNF-inducible RELA/p65 activation and IL-6-inducible STAT3 signaling). Promotes RNA synthesis in genetic programs for cell growth, differentiation and viral pathogenesis. P-TEFb is also involved in cotranscriptional histone modification, mRNA processing and mRNA export. Modulates a complex network of chromatin modifications including histone H2B monoubiquitination (H2Bub1), H3 lysine 4 trimethylation (H3K4me3) and H3K36me3; integrates phosphorylation during transcription with chromatin modifications to control co-transcriptional histone mRNA processing. The CDK9/cyclin-K complex has also a kinase activity towards CTD of RNAP II and can substitute for CDK9/cyclin-T P-TEFb in vitro. Replication stress response protein; the CDK9/cyclin-K complex is required for genome integrity maintenance, by promoting cell cycle recovery from replication arrest and limiting single-stranded DNA amount in response to replication stress, thus reducing the breakdown of stalled replication forks and avoiding DNA damage. In addition, probable function in DNA repair of isoform 2 via interaction with KU70/XRCC6. Promotes cardiac myocyte enlargement. RPB1/POLR2A phosphorylation on 'Ser-2' in CTD activates transcription. AR phosphorylation modulates AR transcription factor promoter selectivity and cell growth. DSIF and NELF phosphorylation promotes transcription by inhibiting their negative effect. The phosphorylation of MYOD1 enhances its transcriptional activity and thus promotes muscle differentiation. Catalyzes phosphorylation of KAT5, promoting KAT5 recruitment to chromatin and histone acetyltransferase activity. The sequence is that of Cyclin-dependent kinase 9 (Cdk9) from Mus musculus (Mouse).